We begin with the raw amino-acid sequence, 258 residues long: Tryptophan synthase alpha chain (258 aa).

Residues E44 and D55 each act as proton acceptor in the active site.

Belongs to the TrpA family. Tetramer of two alpha and two beta chains.

It catalyses the reaction (1S,2R)-1-C-(indol-3-yl)glycerol 3-phosphate + L-serine = D-glyceraldehyde 3-phosphate + L-tryptophan + H2O. It participates in amino-acid biosynthesis; L-tryptophan biosynthesis; L-tryptophan from chorismate: step 5/5. Its function is as follows. The alpha subunit is responsible for the aldol cleavage of indoleglycerol phosphate to indole and glyceraldehyde 3-phosphate. In Petrotoga mobilis (strain DSM 10674 / SJ95), this protein is Tryptophan synthase alpha chain.